A 154-amino-acid chain; its full sequence is Nucleoside diphosphate kinase (154 aa).

ATP-binding residues include K12, F60, R88, T94, R105, and N115. Catalysis depends on H118, which acts as the Pros-phosphohistidine intermediate.

It belongs to the NDK family. It depends on Mg(2+) as a cofactor.

Its subcellular location is the cytoplasm. It catalyses the reaction a 2'-deoxyribonucleoside 5'-diphosphate + ATP = a 2'-deoxyribonucleoside 5'-triphosphate + ADP. The catalysed reaction is a ribonucleoside 5'-diphosphate + ATP = a ribonucleoside 5'-triphosphate + ADP. Major role in the synthesis of nucleoside triphosphates other than ATP. The ATP gamma phosphate is transferred to the NDP beta phosphate via a ping-pong mechanism, using a phosphorylated active-site intermediate. The chain is Nucleoside diphosphate kinase from Haloarcula marismortui (strain ATCC 43049 / DSM 3752 / JCM 8966 / VKM B-1809) (Halobacterium marismortui).